The sequence spans 154 residues: MMNKGGRLRKAVRKSIPATFRLFLAFNFFVYGLAKVVIGQFGEVTPEIEAAAGKGFTIAWTFFGYSHVYELFIGFGEILAAVLLLIPRTAALGAVIFMPIIVNIVLINYCFDIGVQDLSTILMVMCLILLWMDRRKFMGIFRQEPIDSRQVMKR.

Transmembrane regions (helical) follow at residues 20-42 (FRLF…GQFG), 62-84 (FFGY…AVLL), 91-109 (ALGA…LINY), and 113-132 (IGVQ…LLWM).

The protein localises to the cell membrane. This is an uncharacterized protein from Bacillus subtilis (strain 168).